Here is a 617-residue protein sequence, read N- to C-terminus: Erythritol-mannosyl-transferase 1 (617 aa).

Disordered stretches follow at residues 365 to 396 and 567 to 617; these read RNPG…IDSR and RQRK…VTNP. Polar residues predominate over residues 371–381; that stretch reads GFTSPLNSPTA. The segment covering 386 to 396 has biased composition (basic and acidic residues); that stretch reads KWDEKRPIDSR. Polar residues predominate over residues 578–603; the sequence is TAKTSLSVDTTEVATPTFTDTETSLS.

Belongs to the UDP-glycosyltransferase family.

The protein operates within secondary metabolite biosynthesis. In terms of biological role, glycosyltransferase; part of the gene cluster that mediates the biosynthesis of mannosylerythritol lipids (MELs), surface-active substances that enhance the availability of water-insoluble substrates. Depending on the number of acetyl groups, mannosylerythritol lipids can be differentiated into MEL A (fully acetylated), MEL B and MEL C (monoacetylated at R-6 and R-4, respectively), and the fully deacetylated MEL D. The first step in the pathway is the generation of mannosylerythritol by the glycosyltransferase EMT1 which catalyzes the transfer of GDP-mannose to the C-4 atom of meso-erythritol. This reaction has to be stereospecific, since only mannosyl-D-erythritol is generated. The produced disaccharide is subsequently acylated with fatty acids of various lengths by the acyltransferases MAC1 and MAC2 at positions C-2 and C-3, repectively. The existence of MEL derivatives which carry an acetyl group at C-2 implies that at least MAC1 also accepts acetyl-CoA as a donor. The final step of MEL biosynthesis is the acetylation of the fully acylated mannosylerythritol lipids catalyzed by the acetyl-CoA-dependent acetyltransferase MAT1. MAT1 displays a relaxed regioselectivity and is able to transfer acetylgroups to both positions C-4 and C-6 of the mannosyl moiety. This is Erythritol-mannosyl-transferase 1 from Pseudozyma antarctica (strain T-34) (Yeast).